A 70-amino-acid chain; its full sequence is Ubiquinol-cytochrome c reductase complex assembly factor 5 (70 aa).

Residues 1–19 (MFTRAQVRRILQRVPGKQR) are Mitochondrial matrix-facing. The helical transmembrane segment at 20 to 41 (FGIYRFLPFFFVLGGTMEWIMI) threads the bilayer. Residues 42–70 (KVRVGQETFYDVYRRKASERQYQRRLEDE) lie on the Mitochondrial intermembrane side of the membrane.

Belongs to the UQCC5 family. In terms of assembly, associates with the mitochondrial ribosome. Interacts with UQCC6. Interacts with MT-CYB; interacts with newly synthesizes MT-CYB. Forms a complex, named COMB/coordinator of mitochondrial CYTB biogenesis, composed of UQCC1, UQCC2, UQCC4, UQCC5 and UQCC6; regulates MT-CYB synthesis and promotes its membrane insertion.

The protein localises to the mitochondrion inner membrane. In terms of biological role, required for the assembly and stability of the mitochondrial ubiquinol-cytochrome c reductase complex (complex III (CIII) or cytochrome b-c1 complex), a multisubunit transmembrane complex that is part of the mitochondrial electron transport chain (ETC) which drives oxidative phosphorylation. Mediates early complex III biogenesis. Participates in regulating the levels of electron transport chain proteins, and therefore energy supply, in response to changes in energy demand. Also involved in the first steps of cytochrome c oxidase complex (complex IV) assembly. This Homo sapiens (Human) protein is Ubiquinol-cytochrome c reductase complex assembly factor 5.